The sequence spans 527 residues: Protein IQ-DOMAIN 4 (527 aa).

The tract at residues 13–90 (CLSPGKDKKN…PPSPPPPPPA (78 aa)) is disordered. Basic and acidic residues predominate over residues 17 to 26 (GKDKKNQKPE). A compositionally biased stretch (pro residues) spans 63–90 (PYPPPPPLPDFAPQPLLPPPSPPPPPPA). The 29-residue stretch at 147–175 (EETAAIKIQNAYRCYTARRTLRALRGMAR) folds into the IQ domain. Positions 256-273 (RSVNRKEASVRRERALAY) are calmodulin-binding. The tract at residues 323–527 (VSVKSSLKRE…EKKRRNGGSS (205 aa)) is disordered. Positions 335–360 (IKSSPARSKTQKSASQSSIQWPVNND) are enriched in polar residues. Over residues 361 to 370 (TKSRKIEVTN) the composition is skewed to basic and acidic residues. 2 stretches are compositionally biased toward polar residues: residues 399-422 (LDNT…NAQT) and 437-455 (NTKT…NLAN). Residues 471–481 (PKKEVVADKKK) show a composition bias toward basic and acidic residues. The Nuclear localization signal motif lies at 478-485 (DKKKPPQM).

This sequence belongs to the IQD family. As to quaternary structure, binds to multiple calmodulin (CaM) in the presence of Ca(2+) and CaM-like proteins.

It localises to the nucleus. The protein resides in the nucleolus. Functionally, may be involved in cooperative interactions with calmodulins or calmodulin-like proteins. Recruits calmodulin proteins to microtubules, thus being a potential scaffold in cellular signaling and trafficking. May associate with nucleic acids and regulate gene expression at the transcriptional or post-transcriptional level. The sequence is that of Protein IQ-DOMAIN 4 from Arabidopsis thaliana (Mouse-ear cress).